The sequence spans 249 residues: 2,3-bisphosphoglycerate-dependent phosphoglycerate mutase (249 aa).

Residues 8–15 (RHGQSVWN), 21–22 (TG), arginine 60, 87–90 (ERHY), lysine 98, 114–115 (RR), and 183–184 (GN) contribute to the substrate site. Histidine 9 (tele-phosphohistidine intermediate) is an active-site residue. Glutamate 87 (proton donor/acceptor) is an active-site residue.

The protein belongs to the phosphoglycerate mutase family. BPG-dependent PGAM subfamily. In terms of assembly, homodimer.

It catalyses the reaction (2R)-2-phosphoglycerate = (2R)-3-phosphoglycerate. It participates in carbohydrate degradation; glycolysis; pyruvate from D-glyceraldehyde 3-phosphate: step 3/5. Catalyzes the interconversion of 2-phosphoglycerate and 3-phosphoglycerate. The chain is 2,3-bisphosphoglycerate-dependent phosphoglycerate mutase from Solidesulfovibrio magneticus (strain ATCC 700980 / DSM 13731 / RS-1) (Desulfovibrio magneticus).